The sequence spans 333 residues: tRNA N6-adenosine threonylcarbamoyltransferase (333 aa).

Positions 111 and 115 each coordinate Fe cation. Substrate is bound by residues 134–138, D167, G180, and N272; that span reads LVSGG. D300 contacts Fe cation.

Belongs to the KAE1 / TsaD family. Fe(2+) is required as a cofactor.

It is found in the cytoplasm. The enzyme catalyses L-threonylcarbamoyladenylate + adenosine(37) in tRNA = N(6)-L-threonylcarbamoyladenosine(37) in tRNA + AMP + H(+). Its function is as follows. Required for the formation of a threonylcarbamoyl group on adenosine at position 37 (t(6)A37) in tRNAs that read codons beginning with adenine. Is involved in the transfer of the threonylcarbamoyl moiety of threonylcarbamoyl-AMP (TC-AMP) to the N6 group of A37, together with TsaE and TsaB. TsaD likely plays a direct catalytic role in this reaction. The chain is tRNA N6-adenosine threonylcarbamoyltransferase from Legionella pneumophila (strain Lens).